The chain runs to 117 residues: Immunoglobulin heavy variable 3-30-3 (117 aa).

An N-terminal signal peptide occupies residues 1–19 (MEFGLSWVFLVALLRGVQC). A Pyrrolidone carboxylic acid modification is found at Gln20. The tract at residues 20–44 (QVQLVESGGGVVQPGRSLRLSCAAS) is framework-1. Residues 20 to 117 (QVQLVESGGG…EDTAVYYCAR (98 aa)) enclose the Ig-like domain. An intrachain disulfide couples Cys41 to Cys115. The tract at residues 45–52 (GFTFSSYA) is complementarity-determining-1. Residues 53 to 69 (MHWVRQAPGKGLEWVAV) are framework-2. Positions 70 to 77 (ISYDGSNK) are complementarity-determining-2. Residues 78–115 (YYADSVKGRFTISRDNSKNTLYLQMNSLRAEDTAVYYC) form a framework-3 region. The interval 116–117 (AR) is complementarity-determining-3.

As to quaternary structure, immunoglobulins are composed of two identical heavy chains and two identical light chains; disulfide-linked.

It localises to the secreted. The protein resides in the cell membrane. In terms of biological role, v region of the variable domain of immunoglobulin heavy chains that participates in the antigen recognition. Immunoglobulins, also known as antibodies, are membrane-bound or secreted glycoproteins produced by B lymphocytes. In the recognition phase of humoral immunity, the membrane-bound immunoglobulins serve as receptors which, upon binding of a specific antigen, trigger the clonal expansion and differentiation of B lymphocytes into immunoglobulins-secreting plasma cells. Secreted immunoglobulins mediate the effector phase of humoral immunity, which results in the elimination of bound antigens. The antigen binding site is formed by the variable domain of one heavy chain, together with that of its associated light chain. Thus, each immunoglobulin has two antigen binding sites with remarkable affinity for a particular antigen. The variable domains are assembled by a process called V-(D)-J rearrangement and can then be subjected to somatic hypermutations which, after exposure to antigen and selection, allow affinity maturation for a particular antigen. This Homo sapiens (Human) protein is Immunoglobulin heavy variable 3-30-3.